The primary structure comprises 246 residues: Probable transcriptional regulatory protein ORF2U (246 aa).

The protein belongs to the TACO1 family.

It is found in the cytoplasm. The protein is Probable transcriptional regulatory protein ORF2U of Hathewaya histolytica (Clostridium histolyticum).